A 659-amino-acid polypeptide reads, in one-letter code: tRNA uridine 5-carboxymethylaminomethyl modification enzyme MnmG (659 aa).

An FAD-binding site is contributed by 13–18 (GGGHAG). 281-295 (GPRYCPSVEDKINRF) provides a ligand contact to NAD(+).

It belongs to the MnmG family. Homodimer. Heterotetramer of two MnmE and two MnmG subunits. FAD is required as a cofactor.

The protein resides in the cytoplasm. NAD-binding protein involved in the addition of a carboxymethylaminomethyl (cmnm) group at the wobble position (U34) of certain tRNAs, forming tRNA-cmnm(5)s(2)U34. In Delftia acidovorans (strain DSM 14801 / SPH-1), this protein is tRNA uridine 5-carboxymethylaminomethyl modification enzyme MnmG.